The chain runs to 497 residues: L-arabinose isomerase (497 aa).

4 residues coordinate Mn(2+): E306, E331, H348, and H447.

The protein belongs to the arabinose isomerase family. Mn(2+) is required as a cofactor.

The catalysed reaction is beta-L-arabinopyranose = L-ribulose. It participates in carbohydrate degradation; L-arabinose degradation via L-ribulose; D-xylulose 5-phosphate from L-arabinose (bacterial route): step 1/3. Functionally, catalyzes the conversion of L-arabinose to L-ribulose. This chain is L-arabinose isomerase, found in Halalkalibacterium halodurans (strain ATCC BAA-125 / DSM 18197 / FERM 7344 / JCM 9153 / C-125) (Bacillus halodurans).